Here is a 185-residue protein sequence, read N- to C-terminus: Hypoxanthine/guanine phosphoribosyltransferase (185 aa).

This sequence belongs to the purine/pyrimidine phosphoribosyltransferase family. Archaeal HPRT subfamily. As to quaternary structure, homodimer.

The protein localises to the cytoplasm. The enzyme catalyses IMP + diphosphate = hypoxanthine + 5-phospho-alpha-D-ribose 1-diphosphate. It carries out the reaction GMP + diphosphate = guanine + 5-phospho-alpha-D-ribose 1-diphosphate. Its pathway is purine metabolism; IMP biosynthesis via salvage pathway; IMP from hypoxanthine: step 1/1. Catalyzes a salvage reaction resulting in the formation of IMP that is energically less costly than de novo synthesis. This Methanococcus vannielii (strain ATCC 35089 / DSM 1224 / JCM 13029 / OCM 148 / SB) protein is Hypoxanthine/guanine phosphoribosyltransferase.